Consider the following 112-residue polypeptide: Mitochondrial import inner membrane translocase subunit TIM14-2 (112 aa).

Residues 7–25 (AGAAVAAAAYAGKYGIEAW) form a helical membrane-spanning segment. Residues 53 to 112 (EAALILGVRESVAAEKVKEAHRRVMVANHPDAGGSHYLASKINEAKDMMLGKTKNSGSAF) enclose the J domain.

The protein belongs to the TIM14 family. In terms of assembly, probable component of the PAM complex at least composed of a mitochondrial HSP70 protein, TIMM44 and TIMM14. The complex interacts with the TIMM23 component of the TIM17:23 complex.

It is found in the mitochondrion. Its subcellular location is the mitochondrion inner membrane. Functionally, component of the PAM complex, a complex required for the translocation of transit peptide-containing proteins from the inner membrane into the mitochondrial matrix in an ATP-dependent manner. This chain is Mitochondrial import inner membrane translocase subunit TIM14-2 (TIM14-2), found in Arabidopsis thaliana (Mouse-ear cress).